The sequence spans 225 residues: PKHD-type hydroxylase YbiX (225 aa).

Positions 78–177 (TLSTPLFNRY…RVASFMWIQS (100 aa)) constitute a Fe2OG dioxygenase domain. Fe cation-binding residues include His-96, Asp-98, and His-158. Arg-168 contacts 2-oxoglutarate.

It depends on Fe(2+) as a cofactor. Requires L-ascorbate as cofactor.

This Escherichia coli O7:K1 (strain IAI39 / ExPEC) protein is PKHD-type hydroxylase YbiX.